Here is a 374-residue protein sequence, read N- to C-terminus: Tuliposide A-converting enzyme b3, amyloplastic (374 aa).

The transit peptide at 1–68 (MSAALFCGPP…TNSSLSPSPT (68 aa)) directs the protein to the amyloplast. Ser-226 functions as the Acyl-ester intermediate in the catalytic mechanism. Residues Asp-316 and His-348 each act as charge relay system in the active site.

It belongs to the AB hydrolase superfamily. In terms of assembly, homodimer. As to expression, highly expressed in pistil and bulb scales. Lower expression in stem, and barely detected in root, leaf, petal and stamen.

It localises to the plastid. The protein localises to the amyloplast. The catalysed reaction is 6-tuliposide A = tulipalin A + D-glucose. Its function is as follows. Lactone-forming carboxylesterases, specifically catalyzing intramolecular transesterification, but not hydrolysis. Involved in the biosynthesis of tulipalins, defensive chemicals that show antimicrobial activities against a broad range of strains of bacteria and fungi. Substrates are 6-tuliposide A &gt; 6-tuliposide B. The chain is Tuliposide A-converting enzyme b3, amyloplastic (TCEA-B3) from Tulipa gesneriana (Garden tulip).